The sequence spans 99 residues: DNA-binding protein Fis (99 aa).

Residues 75-94 constitute a DNA-binding region (H-T-H motif); that stretch reads QTRAALMLGVNRGTLRKKLK.

This sequence belongs to the transcriptional regulatory Fis family. In terms of assembly, homodimer.

In terms of biological role, activates ribosomal RNA transcription. Plays a direct role in upstream activation of rRNA promoters. The sequence is that of DNA-binding protein Fis from Actinobacillus succinogenes (strain ATCC 55618 / DSM 22257 / CCUG 43843 / 130Z).